A 558-amino-acid polypeptide reads, in one-letter code: Leucine-rich repeat-containing protein 71 (558 aa).

Low complexity predominate over residues 1-18 (MSSEPSTTGTSPRTPRPG). Disordered stretches follow at residues 1–55 (MSSE…NPEE) and 86–112 (RVQQ…SASC). Positions 28–38 (KKGDRAAKDKT) are enriched in basic and acidic residues. A compositionally biased stretch (polar residues) spans 86-99 (RVQQSSVPSASTSE). LRR repeat units lie at residues 196–216 (TLRK…SKLM), 221–241 (TIVH…QLLG), 253–274 (TLVS…YIAD), and 281–302 (SLLW…KLAE). Positions 325–415 (GTQERSRSPS…DAAKAGKGKV (91 aa)) are disordered. 2 stretches are compositionally biased toward basic and acidic residues: residues 339–348 (GDSKAEREKS) and 380–391 (KTGEVVKKEEKL).

This Mus musculus (Mouse) protein is Leucine-rich repeat-containing protein 71 (Lrrc71).